Consider the following 100-residue polypeptide: Phosphoribosylformylglycinamidine synthase subunit PurS (100 aa).

It belongs to the PurS family. In terms of assembly, homodimer. Part of the FGAM synthase complex composed of 1 PurL, 1 PurQ and 2 PurS subunits.

It localises to the cytoplasm. The enzyme catalyses N(2)-formyl-N(1)-(5-phospho-beta-D-ribosyl)glycinamide + L-glutamine + ATP + H2O = 2-formamido-N(1)-(5-O-phospho-beta-D-ribosyl)acetamidine + L-glutamate + ADP + phosphate + H(+). It functions in the pathway purine metabolism; IMP biosynthesis via de novo pathway; 5-amino-1-(5-phospho-D-ribosyl)imidazole from N(2)-formyl-N(1)-(5-phospho-D-ribosyl)glycinamide: step 1/2. In terms of biological role, part of the phosphoribosylformylglycinamidine synthase complex involved in the purines biosynthetic pathway. Catalyzes the ATP-dependent conversion of formylglycinamide ribonucleotide (FGAR) and glutamine to yield formylglycinamidine ribonucleotide (FGAM) and glutamate. The FGAM synthase complex is composed of three subunits. PurQ produces an ammonia molecule by converting glutamine to glutamate. PurL transfers the ammonia molecule to FGAR to form FGAM in an ATP-dependent manner. PurS interacts with PurQ and PurL and is thought to assist in the transfer of the ammonia molecule from PurQ to PurL. This Synechocystis sp. (strain ATCC 27184 / PCC 6803 / Kazusa) protein is Phosphoribosylformylglycinamidine synthase subunit PurS.